Here is a 429-residue protein sequence, read N- to C-terminus: Glucose-1-phosphate adenylyltransferase (429 aa).

Alpha-D-glucose 1-phosphate is bound by residues Tyr-116, Gly-181, 196–197 (EK), and Ser-214.

Belongs to the bacterial/plant glucose-1-phosphate adenylyltransferase family. Homotetramer.

It catalyses the reaction alpha-D-glucose 1-phosphate + ATP + H(+) = ADP-alpha-D-glucose + diphosphate. It functions in the pathway glycan biosynthesis; glycogen biosynthesis. Involved in the biosynthesis of ADP-glucose, a building block required for the elongation reactions to produce glycogen. Catalyzes the reaction between ATP and alpha-D-glucose 1-phosphate (G1P) to produce pyrophosphate and ADP-Glc. This chain is Glucose-1-phosphate adenylyltransferase, found in Paramagnetospirillum magneticum (strain ATCC 700264 / AMB-1) (Magnetospirillum magneticum).